The chain runs to 365 residues: tRNA N6-adenosine threonylcarbamoyltransferase (365 aa).

Residues His-111 and His-115 each contribute to the Fe cation site. Residues Ile-140–Gly-144, Asp-173, Gly-186, and Asn-298 contribute to the substrate site. Asp-323 is a binding site for Fe cation.

It belongs to the KAE1 / TsaD family. Requires Fe(2+) as cofactor.

It is found in the cytoplasm. It catalyses the reaction L-threonylcarbamoyladenylate + adenosine(37) in tRNA = N(6)-L-threonylcarbamoyladenosine(37) in tRNA + AMP + H(+). Its function is as follows. Required for the formation of a threonylcarbamoyl group on adenosine at position 37 (t(6)A37) in tRNAs that read codons beginning with adenine. Is involved in the transfer of the threonylcarbamoyl moiety of threonylcarbamoyl-AMP (TC-AMP) to the N6 group of A37, together with TsaE and TsaB. TsaD likely plays a direct catalytic role in this reaction. The polypeptide is tRNA N6-adenosine threonylcarbamoyltransferase (Thermomicrobium roseum (strain ATCC 27502 / DSM 5159 / P-2)).